Consider the following 547-residue polypeptide: Glucose-6-phosphate isomerase (547 aa).

Residue E352 is the Proton donor of the active site. Active-site residues include H383 and K511.

It belongs to the GPI family.

Its subcellular location is the cytoplasm. It catalyses the reaction alpha-D-glucose 6-phosphate = beta-D-fructose 6-phosphate. Its pathway is carbohydrate biosynthesis; gluconeogenesis. It functions in the pathway carbohydrate degradation; glycolysis; D-glyceraldehyde 3-phosphate and glycerone phosphate from D-glucose: step 2/4. Functionally, catalyzes the reversible isomerization of glucose-6-phosphate to fructose-6-phosphate. The sequence is that of Glucose-6-phosphate isomerase from Rhodospirillum rubrum (strain ATCC 11170 / ATH 1.1.1 / DSM 467 / LMG 4362 / NCIMB 8255 / S1).